The sequence spans 380 residues: Cytochrome b (380 aa).

4 helical membrane passes run 34–54 (FGSL…FLAM), 78–99 (WLLR…YFHI), 114–134 (WNIG…GYVL), and 179–199 (FFTF…IHLL). Heme b contacts are provided by histidine 84 and histidine 98. Residue histidine 197 participates in heme b binding. Histidine 202 lines the a ubiquinone pocket. 4 helical membrane passes run 227–247 (FKDL…STFA), 289–309 (LGGV…PITH), 321–341 (TAKA…WIGG), and 348–368 (FISI…LIIP).

Belongs to the cytochrome b family. As to quaternary structure, the cytochrome bc1 complex contains 3 respiratory subunits (MT-CYB, CYC1 and UQCRFS1), 2 core proteins (UQCRC1 and UQCRC2) and probably 6 low-molecular weight proteins. It depends on heme b as a cofactor.

It is found in the mitochondrion inner membrane. Component of the ubiquinol-cytochrome c reductase complex (complex III or cytochrome b-c1 complex) that is part of the mitochondrial respiratory chain. The b-c1 complex mediates electron transfer from ubiquinol to cytochrome c. Contributes to the generation of a proton gradient across the mitochondrial membrane that is then used for ATP synthesis. In Glandirana rugosa (Japanese wrinkled frog), this protein is Cytochrome b (mt-cyb).